Reading from the N-terminus, the 532-residue chain is Probable galacturonosyltransferase 14 (532 aa).

The Cytoplasmic segment spans residues 1–40 (MQLHISPSMRSITISSSNEFIDLMKIKVAARHISYRTLFH). A helical; Signal-anchor for type II membrane protein membrane pass occupies residues 41-61 (TILILAFLLPFVFILTAVVTL). The Lumenal segment spans residues 62 to 532 (EGVNKCSSID…DFIKNCHILE (471 aa)). Residues Asn305, Asn395, Asn444, and Asn519 are each glycosylated (N-linked (GlcNAc...) asparagine).

Belongs to the glycosyltransferase 8 family. As to expression, expressed in roots, inflorescences, siliques, leaves and stems. Accumulates in pollen grains.

The protein localises to the golgi apparatus membrane. It participates in glycan metabolism; pectin biosynthesis. May be involved in pectin and/or xylans biosynthesis in cell walls. Together with GAUT13, required for pollen tube growth, possibly through the regulation of pectin biosynthesis and repartition in the pollen tube wall. This Arabidopsis thaliana (Mouse-ear cress) protein is Probable galacturonosyltransferase 14.